Consider the following 519-residue polypeptide: MLRAALSTARRGPRLSRLLSAAATSAVPAPNQQPEVFCNQIFINNEWHDAVSKKTFPTVNPSTGEVICQVAEGNKEDVDKAVKAAQAAFQLGSPWRRMDASDRGRLLYRLADLIERDRTYLAALETLDNGKPYVISYLVDLDMVLKCLRYYAGWADKYHGKTIPIDGDFFSYTRHEPVGVCGQIIPWNFPLLMQAWKLGPALATGNVVVMKVAEQTPLTALYVANLIKEAGFPPGVVNIVPGFGPTAGAAIASHEDVDKVAFTGSTEVGHLIQVAAGSSNLKRVTLELGGKSPNIIMSDADMDWAVEQAHFALFFNQGQCCCAGSRTFVQEDVYDEFVERSVARAKSRVVGNPFDSRTEQGPQVDETQFKKILGYIKSGQQEGAKLLCGGGAAADRGYFIQPTVFGDVKDGMTIAKEEIFGPVMQILKFKTIEEVVGRANNSKYGLAAAVFTKDLDKANYLSQALQAGTVWINCYDVFGAQSPFGGYKMSGSGRELGEYGLQAYTEVKTVTVKVPQKNS.

The transit peptide at 1 to 19 (MLRAALSTARRGPRLSRLL) directs the protein to the mitochondrion. Positions 12–26 (GPRLSRLLSAAATSA) match the SIFI-degron motif. Lys54, Lys75, Lys80, and Lys161 each carry N6-acetyllysine. 264 to 269 (GSTEVG) serves as a coordination point for NAD(+). Glu287 functions as the Proton acceptor in the catalytic mechanism. Residue Cys321 is the Nucleophile of the active site. Lys370, Lys377, Lys385, Lys409, Lys428, Lys430, Lys443, and Lys453 each carry N6-acetyllysine.

The protein belongs to the aldehyde dehydrogenase family. As to quaternary structure, homotetramer. In terms of processing, in response to mitochondrial stress, the precursor protein is ubiquitinated by the SIFI complex in the cytoplasm before mitochondrial import, leading to its degradation. Within the SIFI complex, UBR4 initiates ubiquitin chain that are further elongated or branched by KCMF1.

Its subcellular location is the mitochondrion matrix. It carries out the reaction an aldehyde + NAD(+) + H2O = a carboxylate + NADH + 2 H(+). It functions in the pathway alcohol metabolism; ethanol degradation; acetate from ethanol: step 2/2. Functionally, required for clearance of cellular formaldehyde, a cytotoxic and carcinogenic metabolite that induces DNA damage. The chain is Aldehyde dehydrogenase, mitochondrial (Aldh2) from Rattus norvegicus (Rat).